The primary structure comprises 128 residues: Gastrotropin (128 aa).

Position 2 is an N-acetylalanine (alanine 2).

This sequence belongs to the calycin superfamily. Fatty-acid binding protein (FABP) family. Expressed in ileum.

The protein resides in the cytoplasm. It is found in the membrane. Binds to bile acids and is involved in enterohepatic bile acid metabolism. Required for efficient apical to basolateral transport of conjugated bile acids in ileal enterocytes. Stimulates gastric acid and pepsinogen secretion. In Oryctolagus cuniculus (Rabbit), this protein is Gastrotropin (FABP6).